We begin with the raw amino-acid sequence, 201 residues long: Putative manganese efflux pump MntP 2 (201 aa).

6 helical membrane passes run 3–23, 39–59, 65–85, 116–136, 141–161, and 176–196; these read LISV…VSIT, IGLF…SIGI, IAAL…GKMI, LILL…SFAF, IINT…IGVM, and ILGG…HTNI.

This sequence belongs to the MntP (TC 9.B.29) family.

The protein localises to the cell membrane. Its function is as follows. Probably functions as a manganese efflux pump. This chain is Putative manganese efflux pump MntP 2, found in Clostridium botulinum (strain Langeland / NCTC 10281 / Type F).